Here is a 1090-residue protein sequence, read N- to C-terminus: MSVYHLPTLLNPLVNAIFNCPEPERSPLKKLFANLKTRRFILLAPPSEYLLNYHDVKSKLPLHDLCYNAEFINSYILLMTENSYINTNSRDSHYETLDGKTVVIQWKNNVIHALNGFHIRRRLKILETKILPNFNDYFEGAADFIILFIDQPLNCEFVPNDYLQCFHNYEKIPKNAHAMPNLSIDSFQQERSSFENILHIHPARLTQLGQLFSSYRTLAPGDDPSRSIFESIVQQAFDGMKSDSLFKNFSNLYDLIHDYFELNLYDDIWSRLTTHFKGHEVDTEKYKYFSVNQLLTDFYSKDYGEFKLHDITLIERRLHLASKHLQKLALTHSYAEKSKILVETLQKLSGTTEMDSHQLELPDGLNNMTMDADTLISLFVLVVCRSEQKHLKSHLYYLQNFSNNSSSTKFGILGYAVSTLEAVVCYFEDFNKNTGNVAKANTLCEKTKNLLDKLSCENPTNEIEDLATYKDILTYRNEQGQSILSICITNHKNYILLDILSEYENDFPVEDLLEDETIDGSTLLIESIKAGNLEAAKVLIKIMLFNCTEEELVSYINKTDKYARTVAHYLTHEMDILKSIGNYIDWKRKNSSGQTPLFSIFRSYDQPNYEEMVKTAFDIANTWYRKHNSLFDYLDHTDNKGNSLLHVLKTNIPILLQLTKLDINEENYKGLTPLMVYVKYKRLSNIDAITKDHRLILEKVQNSTFFTCFDYAKDHSVLSKIGERGVKDSLFGLIYFHSLRYHNLNATTNITSVSNAEKPFATTVINMKTIQGLLRSILKDNPFTFLPLNTYIDEISHLNRSDLTIIGKTDVTSLLHQLTNCFNVLLFLKKIPENLFTDEASILYWMRINTSKRNQKPSGKENPKTMEPEEINMIQSFLRFNFDEISSFKASLNILRKVLIFINLKSDDFEDAYKGLNEMGRKLINSEASSAFKGIITNHNMFSELSLAELLENVRFLEQCTIQLSSFVQIILFEKIPNWWKHYGEFLALHKSYRKAFPNMVKPKSASDTSSRAPLGGFIETKREQSEQRLAVQIKASSKMLKELGSEIFVAHERLAEELSNYMEFRKACLDQRSLVAFATTNISVLQECV.

The VPS9 domain maps to 289-436 (FSVNQLLTDF…FEDFNKNTGN (148 aa)).

It belongs to the UPF0507 family.

This chain is UPF0507 protein SCY_4172, found in Saccharomyces cerevisiae (strain YJM789) (Baker's yeast).